The primary structure comprises 155 residues: Protein-export protein SecB (155 aa).

Belongs to the SecB family. As to quaternary structure, homotetramer, a dimer of dimers. One homotetramer interacts with 1 SecA dimer.

The protein localises to the cytoplasm. In terms of biological role, one of the proteins required for the normal export of preproteins out of the cell cytoplasm. It is a molecular chaperone that binds to a subset of precursor proteins, maintaining them in a translocation-competent state. It also specifically binds to its receptor SecA. In Shigella sonnei (strain Ss046), this protein is Protein-export protein SecB.